A 484-amino-acid polypeptide reads, in one-letter code: Pheophytinase, chloroplastic (484 aa).

A chloroplast-targeting transit peptide spans 1 to 47; sequence MEIISLNVVPQCSVVTWSSKLATKRLVPNRSSLLFSGVKKSRLVIRS.

Belongs to the AB hydrolase superfamily. As to quaternary structure, interacts with HCAR, RCCR, PAO and the LHCII complex. Part of a SGR1-CCE-LHCII complex, which acts in chlorophyll breakdown.

The protein localises to the plastid. Its subcellular location is the chloroplast thylakoid membrane. The protein resides in the chloroplast stroma. Alpha/beta hydrolase dephytylating specifically the Mg-free chlorophyll pigment (pheophytin), yielding pheophorbide. No activity on chlorophyll. Belongs to the chlorophyll catabolic enzymes (CCEs). The polypeptide is Pheophytinase, chloroplastic (PPH) (Arabidopsis thaliana (Mouse-ear cress)).